Consider the following 50-residue polypeptide: Toxic protein HokE (50 aa).

Residues 5-25 (YALAAVIVLCLTVLGFTLLVG) form a helical membrane-spanning segment.

Belongs to the Hok/Gef family.

Its subcellular location is the cell inner membrane. In terms of biological role, toxic component of a type I toxin-antitoxin (TA) system; if it expressed it could be neutralized by antisense antitoxin RNA SokE. This chain is Toxic protein HokE, found in Escherichia coli (strain K12).